A 231-amino-acid polypeptide reads, in one-letter code: DNA mismatch repair protein MutH (231 aa).

The protein belongs to the MutH family.

Its subcellular location is the cytoplasm. Functionally, sequence-specific endonuclease that cleaves unmethylated GATC sequences. It is involved in DNA mismatch repair. In Salmonella typhi, this protein is DNA mismatch repair protein MutH.